A 411-amino-acid chain; its full sequence is Inhibin beta B chain (411 aa).

The first 28 residues, methionine 1–glycine 28, serve as a signal peptide directing secretion. The tract at residues tryptophan 27–glutamate 69 is disordered. A propeptide spanning residues serine 29 to arginine 296 is cleaved from the precursor. The span at proline 30–alanine 47 shows a compositional bias: pro residues. The N-linked (GlcNAc...) asparagine glycan is linked to asparagine 97. Cystine bridges form between cysteine 300–cysteine 308, cysteine 307–cysteine 376, cysteine 336–cysteine 408, and cysteine 340–cysteine 410.

This sequence belongs to the TGF-beta family. In terms of assembly, dimeric, linked by one or more disulfide bonds. Inhibin B is a dimer of alpha and beta-B. Activin B is a homodimer of beta-B. Activin AB is a dimer of beta-A and beta-B. Interacts with FST and FSTL3. As to expression, alpha- and beta-B subunits are the predominant forms found in rat testis. Also expressed in ovary.

It localises to the secreted. Functionally, inhibins and activins inhibit and activate, respectively, the secretion of follitropin by the pituitary gland. Inhibins/activins are involved in regulating a number of diverse functions such as hypothalamic and pituitary hormone secretion, gonadal hormone secretion, germ cell development and maturation, erythroid differentiation, insulin secretion, nerve cell survival, embryonic axial development or bone growth, depending on their subunit composition. Inhibins appear to oppose the functions of activins. In terms of biological role, activin B is a dimer of alpha and beta-B that plays a role in several essential biological processes including embryonic development, stem cell maintenance and differentiation, haematopoiesis, cell proliferation and wound healing. Signals through type I receptor ACVR1C, abundantly expressed in pancreatic beta cells, and type II receptors like ACVR2A. Upon ligand binding, these receptors phosphorylate intracellular signaling mediators SMAD2 and SMAD3, which form a complex with SMAD4, translocate to the nucleus, and regulate gene expression. Plays a crucial role in the induction of hepcidin by inflammation through activation of ACVR1C and subsequent phosphorylation of SMAD1/5/8. Regulates adipocyte lipid metabolism by decreasing non-esterified fatty acids and glycerol release and increases intracellular triglyceride content. Stimulates wound healing by promoting cell migration and hair follicle regeneration through the JNK and ERK signaling pathways downstream of RHOA. Inhibin B is a dimer of alpha and beta-B that plays a crucial role in the regulation of the reproductive system by inhibiting the secretion of follicle-stimulating hormone (FSH) from the anterior pituitary gland. Thereby, maintains reproductive homeostasis in both males and females. Acts as a more potent suppressor of FSH release than inhibin A. Functions as competitive receptor antagonist binding activin type II receptors with high affinity in the presence of the TGF-beta type III coreceptor/TGFBR3L. In Rattus norvegicus (Rat), this protein is Inhibin beta B chain (Inhbb).